A 661-amino-acid chain; its full sequence is Acetyl-coenzyme A synthetase (661 aa).

Residues 199-202 (RGGK) and T317 contribute to the CoA site. Residues 393–395 (GEP), 417–422 (DTFWQT), D508, and R523 each bind ATP. S531 is a CoA binding site. R534 serves as a coordination point for ATP. R596 is a binding site for CoA.

The protein belongs to the ATP-dependent AMP-binding enzyme family.

It carries out the reaction acetate + ATP + CoA = acetyl-CoA + AMP + diphosphate. The sequence is that of Acetyl-coenzyme A synthetase (ACS-1) from Coprinopsis cinerea (Inky cap fungus).